We begin with the raw amino-acid sequence, 158 residues long: HVA22-like protein f (158 aa).

A run of 3 helical transmembrane segments spans residues 2-22, 41-61, and 63-83; these read GFIIAIAKRFDALVGPGVMLL, QQWLTYWIIYSLITIFELSVW, and VLAWLPFWPYLKLLFCMWLVL.

Belongs to the DP1 family.

It localises to the membrane. This is HVA22-like protein f (HVA22F) from Arabidopsis thaliana (Mouse-ear cress).